A 2048-amino-acid chain; its full sequence is Myoferlin (2048 aa).

The C2 1 domain occupies 1 to 101 (MLRVIVESAT…IGDQNRSLPY (101 aa)). The Cytoplasmic portion of the chain corresponds to 1–2012 (MLRVIVESAT…MRFIVWRRFK (2012 aa)). The segment at 124–176 (YTPPSAPHPNDPSGTSVPGMGEEEEEDQGDEDRVDGIVRGPGPKGPSGTVSEA) is disordered. Positions 144-156 (GEEEEEDQGDEDR) are enriched in acidic residues. S170 and S174 each carry phosphoserine. 2 C2 domains span residues 183 to 300 (TKGK…RKWL) and 339 to 475 (DSDD…EATT). Residues 186 to 281 (KSSRRMLSNK…RADCLMGEFK (96 aa)) form a necessary for interaction with EHD2 region. Ca(2+)-binding residues include D390, D396, D444, D446, and D452. 2 positions are modified to N6-acetyllysine: K540 and K871. 2 consecutive C2 domains span residues 1110–1238 (GANT…LLWH) and 1269–1397 (LPSQ…GKED). Residues D1142, D1148, D1204, and D1206 each contribute to the Ca(2+) site. Residue K1494 is modified to N6-acetyllysine. 2 consecutive C2 domains span residues 1523–1641 (PAPP…SHCG) and 1759–1907 (GPPG…EKCS). Ca(2+) is bound by residues D1556, D1562, D1611, D1613, D1878, S1881, and D1884. Basic and acidic residues predominate over residues 1964–1975 (EADERPAGKGRS). The interval 1964–1986 (EADERPAGKGRSEPNMNPKLDPP) is disordered. Residues 2013–2033 (WVIIGLLLLLILLLFVAVLLY) form a helical membrane-spanning segment. Topologically, residues 2034 to 2048 (SLPNYLSMKIVRPNA) are extracellular.

The protein belongs to the ferlin family. As to quaternary structure, interacts with EHD1. Interacts with EHD2; the interaction is direct. Interacts with DNM2 and KDR. Interacts with RIPOR2. It depends on Ca(2+) as a cofactor. Expressed in myoblasts (at protein level). Expressed in endothelial cells.

The protein resides in the cell membrane. It localises to the nucleus membrane. It is found in the cytoplasmic vesicle membrane. Functionally, calcium/phospholipid-binding protein that plays a role in the plasmalemma repair mechanism of endothelial cells that permits rapid resealing of membranes disrupted by mechanical stress. Involved in endocytic recycling. Implicated in VEGF signal transduction by regulating the levels of the receptor KDR. The sequence is that of Myoferlin (Myof) from Mus musculus (Mouse).